The chain runs to 81 residues: Probable antimicrobial peptide Con13 (81 aa).

The N-terminal stretch at 1-22 (MNRKLLLVFLVVAMLVMQPAEA) is a signal peptide. Positions 66-81 (EAGQIPFDEFMDVLYS) are excised as a propeptide.

Belongs to the non-disulfide-bridged peptide (NDBP) superfamily. Long chain multifunctional peptide (group 2) family. Expressed by the venom gland.

The protein localises to the secreted. It is found in the target cell membrane. At high concentrations, acts as a pore former in cellular membranes and causes the leakage of the cells. At submicromolar concentrations, degranulates granulocytes and has a weak hemolytic activity against human erythrocytes. Also strongly inhibits the production of superoxide anions. Has a strong antibacterial activity against Gram-negative bacteria but is less active against Gram-positive bacteria. Also has antifungal activity. This chain is Probable antimicrobial peptide Con13, found in Opisthacanthus cayaporum (South American scorpion).